A 240-amino-acid polypeptide reads, in one-letter code: UDP-2,3-diacylglucosamine hydrolase (240 aa).

Mn(2+) contacts are provided by aspartate 8, histidine 10, aspartate 41, asparagine 78, and histidine 113. A substrate-binding site is contributed by 78–79; sequence NR. The substrate site is built by aspartate 121, serine 159, asparagine 163, lysine 166, and histidine 194. The Mn(2+) site is built by histidine 194 and histidine 196.

The protein belongs to the LpxH family. Mn(2+) serves as cofactor.

The protein localises to the cell inner membrane. It catalyses the reaction UDP-2-N,3-O-bis[(3R)-3-hydroxytetradecanoyl]-alpha-D-glucosamine + H2O = 2-N,3-O-bis[(3R)-3-hydroxytetradecanoyl]-alpha-D-glucosaminyl 1-phosphate + UMP + 2 H(+). It participates in glycolipid biosynthesis; lipid IV(A) biosynthesis; lipid IV(A) from (3R)-3-hydroxytetradecanoyl-[acyl-carrier-protein] and UDP-N-acetyl-alpha-D-glucosamine: step 4/6. Hydrolyzes the pyrophosphate bond of UDP-2,3-diacylglucosamine to yield 2,3-diacylglucosamine 1-phosphate (lipid X) and UMP by catalyzing the attack of water at the alpha-P atom. Involved in the biosynthesis of lipid A, a phosphorylated glycolipid that anchors the lipopolysaccharide to the outer membrane of the cell. In Shewanella baltica (strain OS195), this protein is UDP-2,3-diacylglucosamine hydrolase.